The sequence spans 79 residues: CDC42 small effector protein 1 (79 aa).

S-palmitoyl cysteine attachment occurs at residues Cys-10 and Cys-11. One can recognise a CRIB domain in the interval 30–43; it reads IGEPMNFVHLTHIG. The interval 48–79 is disordered; that stretch reads GAGDGLAMTGAVQEQMRSKGNRDRPWSNSRGL. Over residues 63–72 the composition is skewed to basic and acidic residues; sequence MRSKGNRDRP.

It belongs to the CDC42SE/SPEC family. Interacts with CDC42 (in GTP-bound form). Interacts weakly with RAC1 and not at all with RHOA.

Its subcellular location is the cytoplasm. It localises to the cytoskeleton. It is found in the cell membrane. In terms of biological role, probably involved in the organization of the actin cytoskeleton by acting downstream of CDC42, inducing actin filament assembly. Alters CDC42-induced cell shape changes. In activated T-cells, may play a role in CDC42-mediated F-actin accumulation at the immunological synapse. May play a role in early contractile events in phagocytosis in macrophages. This chain is CDC42 small effector protein 1 (CDC42SE1), found in Bos taurus (Bovine).